The sequence spans 203 residues: Proteasome subunit beta 2 (203 aa).

Positions 1–9 are cleaved as a propeptide — removed in mature form; by autocatalysis; it reads MGEEVSIGA. The Nucleophile role is filled by threonine 10.

It belongs to the peptidase T1B family. The 20S proteasome core is composed of 14 alpha and 14 beta subunits that assemble into four stacked heptameric rings, resulting in a barrel-shaped structure. The two inner rings, each composed of seven catalytic beta subunits, are sandwiched by two outer rings, each composed of seven alpha subunits. The catalytic chamber with the active sites is on the inside of the barrel. Has a gated structure, the ends of the cylinder being occluded by the N-termini of the alpha-subunits. Is capped at one or both ends by the proteasome regulatory ATPase, PAN.

Its subcellular location is the cytoplasm. It carries out the reaction Cleavage of peptide bonds with very broad specificity.. With respect to regulation, the formation of the proteasomal ATPase PAN-20S proteasome complex, via the docking of the C-termini of PAN into the intersubunit pockets in the alpha-rings, triggers opening of the gate for substrate entry. Interconversion between the open-gate and close-gate conformations leads to a dynamic regulation of the 20S proteasome proteolysis activity. Its function is as follows. Component of the proteasome core, a large protease complex with broad specificity involved in protein degradation. The polypeptide is Proteasome subunit beta 2 (Pyrobaculum calidifontis (strain DSM 21063 / JCM 11548 / VA1)).